A 581-amino-acid polypeptide reads, in one-letter code: Arginine--tRNA ligase (581 aa).

Residues 131–141 (ANPTGPLHVGH) carry the 'HIGH' region motif.

Belongs to the class-I aminoacyl-tRNA synthetase family. As to quaternary structure, monomer.

It is found in the cytoplasm. The catalysed reaction is tRNA(Arg) + L-arginine + ATP = L-arginyl-tRNA(Arg) + AMP + diphosphate. This chain is Arginine--tRNA ligase, found in Ruegeria pomeroyi (strain ATCC 700808 / DSM 15171 / DSS-3) (Silicibacter pomeroyi).